The sequence spans 544 residues: Probable protein kinase UbiB (544 aa).

In terms of domain architecture, Protein kinase spans 123-501 (DFDLVPLASA…KRQQATGKFL (379 aa)). Residues 129–137 (LASASIAQV) and K152 contribute to the ATP site. Residue D287 is the Proton acceptor of the active site. 2 helical membrane-spanning segments follow: residues 496–516 (ATGKFLFGVGATLVVCSAILV) and 519–539 (TYEQLSLATAIAGVTFWLFSW).

It belongs to the ABC1 family. UbiB subfamily.

Its subcellular location is the cell inner membrane. It functions in the pathway cofactor biosynthesis; ubiquinone biosynthesis [regulation]. In terms of biological role, is probably a protein kinase regulator of UbiI activity which is involved in aerobic coenzyme Q (ubiquinone) biosynthesis. This is Probable protein kinase UbiB from Vibrio vulnificus (strain YJ016).